A 118-amino-acid polypeptide reads, in one-letter code: V-type proton ATPase subunit G 1 (118 aa).

Alanine 2 carries the post-translational modification N-acetylalanine.

It belongs to the V-ATPase G subunit family. In terms of assembly, V-ATPase is a heteromultimeric enzyme made up of two complexes: the ATP-hydrolytic V1 complex and the proton translocation V0 complex. The V1 complex consists of three catalytic AB heterodimers that form a heterohexamer, three peripheral stalks each consisting of EG heterodimers, one central rotor including subunits D and F, and the regulatory subunits C and H. The proton translocation complex V0 consists of the proton transport subunit a, a ring of proteolipid subunits c9c'', rotary subunit d, subunits e and f, and the accessory subunits ATP6AP1/Ac45 and ATP6AP2/PRR. In terms of tissue distribution, kidney; localizes to early distal nephron, encompassing thick ascending limbs and distal convoluted tubules (at protein level). Ubiquitous.

It localises to the apical cell membrane. Subunit of the V1 complex of vacuolar(H+)-ATPase (V-ATPase), a multisubunit enzyme composed of a peripheral complex (V1) that hydrolyzes ATP and a membrane integral complex (V0) that translocates protons. V-ATPase is responsible for acidifying and maintaining the pH of intracellular compartments and in some cell types, is targeted to the plasma membrane, where it is responsible for acidifying the extracellular environment. In aerobic conditions, involved in intracellular iron homeostasis, thus triggering the activity of Fe(2+) prolyl hydroxylase (PHD) enzymes, and leading to HIF1A hydroxylation and subsequent proteasomal degradation. This chain is V-type proton ATPase subunit G 1 (ATP6V1G1), found in Homo sapiens (Human).